The chain runs to 91 residues: Potassium channel toxin MeuTXK-beta-1 (91 aa).

The N-terminal stretch at 1–19 is a signal peptide; sequence MQRNLVVLLFLGMVALSSC. In terms of domain architecture, BetaSPN-type CS-alpha/beta spans 54–91; sequence QFGCPAYQGYCDDHCQDIEKKEGFCHGFKCKCGIPMGF. 3 cysteine pairs are disulfide-bonded: Cys-57-Cys-78, Cys-64-Cys-83, and Cys-68-Cys-85.

As to expression, expressed by the venom gland.

The protein resides in the secreted. Has a low affinity binding to potassium channels of rat brain synaptosomes. Displays weak antibacterial activity against Stenotrophomonas sp. Strongly inhibits the development of the Plasmodium berghei ookinetes. Displays slight hemolytic effect on mouse erythrocytes. Induces cytolysis on Xenopus oocytes at high concentrations. Is not toxic towards mice and towards the insect Tenebrio molitor. In Mesobuthus eupeus (Lesser Asian scorpion), this protein is Potassium channel toxin MeuTXK-beta-1.